The sequence spans 356 residues: Histidinol-phosphate aminotransferase (356 aa).

N6-(pyridoxal phosphate)lysine is present on lysine 214.

The protein belongs to the class-II pyridoxal-phosphate-dependent aminotransferase family. Histidinol-phosphate aminotransferase subfamily. As to quaternary structure, homodimer. The cofactor is pyridoxal 5'-phosphate.

It catalyses the reaction L-histidinol phosphate + 2-oxoglutarate = 3-(imidazol-4-yl)-2-oxopropyl phosphate + L-glutamate. It functions in the pathway amino-acid biosynthesis; L-histidine biosynthesis; L-histidine from 5-phospho-alpha-D-ribose 1-diphosphate: step 7/9. The polypeptide is Histidinol-phosphate aminotransferase (Escherichia coli (strain SMS-3-5 / SECEC)).